A 274-amino-acid chain; its full sequence is MTRIALGIQYDGAAFSGWQSQPHGNTVQDVLEAALREFAGVALPTTVAGRTDAGVHALGQVVHLDTELVRDPFSWVRGTNAFLPPTVAVRWAQAMPEDFHARFSAHRRTYYYALTYGPTRAPLLEGKAGYVTLPPGQSLDVTAMHEAAQVLVGEHDFSSFRAAECQAKSPVKTMYSTEVRGQGEWVFVRIRGSAFLHHMVRNIMGCLVAIGRGKRPAAWMGEVLAARDRKAAAPTFMPDGLYLAEVGYPDAFRLPASPASSSLFRGVFDEHAGP.

Catalysis depends on Asp52, which acts as the Nucleophile. Tyr110 serves as a coordination point for substrate.

This sequence belongs to the tRNA pseudouridine synthase TruA family. In terms of assembly, homodimer.

It carries out the reaction uridine(38/39/40) in tRNA = pseudouridine(38/39/40) in tRNA. In terms of biological role, formation of pseudouridine at positions 38, 39 and 40 in the anticodon stem and loop of transfer RNAs. In Ralstonia nicotianae (strain ATCC BAA-1114 / GMI1000) (Ralstonia solanacearum), this protein is tRNA pseudouridine synthase A.